The sequence spans 481 residues: Bestrophin homolog 17 (481 aa).

The Cytoplasmic segment spans residues M1 to S27. Residues I28–F48 traverse the membrane as a helical segment. The Extracellular segment spans residues A49 to S95. Residues A96–G116 form a helical membrane-spanning segment. Topologically, residues K117 to A230 are cytoplasmic. Residues I231–I251 form a helical membrane-spanning segment. Residues C252 to P274 are Extracellular-facing. Residues I275 to L295 form a helical membrane-spanning segment. Residues N296–G481 are Cytoplasmic-facing. A disordered region spans residues A427–G481. Over residues S445–S461 the composition is skewed to basic and acidic residues. Polar residues predominate over residues S462–E474.

Belongs to the anion channel-forming bestrophin (TC 1.A.46) family. Calcium-sensitive chloride channel subfamily. In terms of assembly, forms oligomers.

The protein resides in the cell membrane. In terms of biological role, forms chloride channels. This Caenorhabditis elegans protein is Bestrophin homolog 17.